Reading from the N-terminus, the 466-residue chain is Zinc finger and SCAN domain-containing protein 26 (466 aa).

Lys-21 participates in a covalent cross-link: Glycyl lysine isopeptide (Lys-Gly) (interchain with G-Cter in SUMO2). Positions 42-124 (CKQFRQLRYE…GILEDLQLDR (83 aa)) constitute an SCAN box domain. Composition is skewed to basic and acidic residues over residues 124–135 (RGKAGEQKDSAQ) and 163–173 (KPEERGKETRS). A disordered region spans residues 124 to 182 (RGKAGEQKDSAQRSRPTVLVGEPAPRREAREQPGCALPQKPEERGKETRSENGNLIAGT). The C2H2-type 1; degenerate zinc-finger motif lies at 220-242 (SQCLETKERLVQNSGLIEHDRAH). C2H2-type zinc fingers lie at residues 270–292 (HPCQ…QKIH), 298–320 (YQCK…LRIH), 326–348 (YLCI…QKIH), 354–376 (RECK…QRVH), 382–404 (HHCN…HRIH), 410–432 (FKCN…VRIH), and 438–460 (YKCS…QRHH).

The protein localises to the nucleus. Its function is as follows. May be involved in transcriptional regulation. The sequence is that of Zinc finger and SCAN domain-containing protein 26 (Zscan26) from Mus musculus (Mouse).